Reading from the N-terminus, the 505-residue chain is ATP synthase subunit alpha, chloroplastic (505 aa).

ATP is bound at residue 170–177; it reads GDRQTGKT.

Belongs to the ATPase alpha/beta chains family. F-type ATPases have 2 components, CF(1) - the catalytic core - and CF(0) - the membrane proton channel. CF(1) has five subunits: alpha(3), beta(3), gamma(1), delta(1), epsilon(1). CF(0) has four main subunits: a, b, b' and c.

It is found in the plastid. Its subcellular location is the chloroplast thylakoid membrane. It catalyses the reaction ATP + H2O + 4 H(+)(in) = ADP + phosphate + 5 H(+)(out). Produces ATP from ADP in the presence of a proton gradient across the membrane. The alpha chain is a regulatory subunit. This is ATP synthase subunit alpha, chloroplastic from Zygnema circumcarinatum (Green alga).